The chain runs to 221 residues: MTYPERKAFVSRITNETKIQIAISLNGGPISIENSILQREESDAAKQVTGSQIIDIQTGVGFLDHMIHALAKHSGWSLIVECIGDLHIDDHHTTEDCGIALGQAFKEALGHVRGVKRFGSGYAPLDEALSRAVVDLSNRPYAVIELGLKREKIGDLSCEMIPHFLESFAEAARITLHVDCLRGFNDHHRSESAFKALAIAIKEAISSNGTNDVPSTKGVLM.

The protein belongs to the imidazoleglycerol-phosphate dehydratase family.

The catalysed reaction is D-erythro-1-(imidazol-4-yl)glycerol 3-phosphate = 3-(imidazol-4-yl)-2-oxopropyl phosphate + H2O. Its pathway is amino-acid biosynthesis; L-histidine biosynthesis; L-histidine from 5-phospho-alpha-D-ribose 1-diphosphate: step 6/9. In Kluyveromyces lactis (strain ATCC 8585 / CBS 2359 / DSM 70799 / NBRC 1267 / NRRL Y-1140 / WM37) (Yeast), this protein is Imidazoleglycerol-phosphate dehydratase (HIS3).